Consider the following 236-residue polypeptide: Giant extracellular hemoglobin linker 2 chain (236 aa).

Residues N66–I108 form the LDL-receptor class A domain. Disulfide bonds link C68-C82, C75-C95, and C89-C106.

Disulfide-linked dimer of identical chains. A model is proposed for the subunit structure of the Tylorrhynchus hemoglobin, consisting of 216 polypeptides chains, 192 heme-containing chains, and 24 linker chains.

Functionally, acts as a linker for the assembly of heme-containing chains in the construction of giant hemoglobin. The chain is Giant extracellular hemoglobin linker 2 chain from Tylorrhynchus heterochetus (Japanese palolo worm).